A 374-amino-acid polypeptide reads, in one-letter code: 2,7-anhydro-N-acetylneuraminate hydratase (374 aa).

NAD(+) contacts are provided by Tyr13, Phe14, Asp35, Asn38, Thr70, Asn72, His75, Glu92, Lys93, Trp162, and Lys163.

This sequence belongs to the Gfo/Idh/MocA family. As to quaternary structure, homodimer. NAD(+) is required as a cofactor.

The catalysed reaction is N-acetyl-2,7-anhydro-alpha-neuraminate + H2O = N-acetyl-alpha-neuraminate. Neu5Ac is produced in the presence of NAD(+) or NADH, but not in the presence of FAD. Functionally, hydratase involved in the degradation of sialic acids, which are present in the host mucus layer and represent a much-coveted source of nutrients for R.gnavus, a prevalent member of the normal gut microbiota. Catalyzes the reversible conversion of the dehydrated form of N-acetylneuraminate (Neu5Ac), 2,7-anhydro-N-acetylneuraminate (2,7-AN), to Neu5Ac, allowing growth on 2,7-AN produced by the IT-sialidase NanH. Acts through a multistep mechanism involving a keto intermediate and cycling of NADH/NAD(+). This is 2,7-anhydro-N-acetylneuraminate hydratase from Mediterraneibacter gnavus (strain ATCC 29149 / DSM 114966 / JCM 6515 / VPI C7-9) (Ruminococcus gnavus).